A 339-amino-acid chain; its full sequence is Heat-inducible transcription repressor HrcA (339 aa).

It belongs to the HrcA family.

Functionally, negative regulator of class I heat shock genes (grpE-dnaK-dnaJ and groELS operons). Prevents heat-shock induction of these operons. The protein is Heat-inducible transcription repressor HrcA of Nitrosospira multiformis (strain ATCC 25196 / NCIMB 11849 / C 71).